Reading from the N-terminus, the 218-residue chain is MSALRITTASAARMLRTSNAMMPSVMGAAQRRALSDSAEPARVPSVESARVPEKLAKEDSPLATPKRNSPDYNVPIDKATSTWTPVPKHIQNGSEEGILPAAVVSGAPMELQARTVRIYLPSKPATQSSNSRVLWRMDWDVLEKGHRWENELMGWQSSGDFVQGTHLTFRTKEEAIQFAEKQGYEYFVQEPNQRHFTPKAYANNFLYSPKKLKIVRTK.

The N-terminal 33 residues, 1-33 (MSALRITTASAARMLRTSNAMMPSVMGAAQRRA), are a transit peptide targeting the mitochondrion. Residues 31 to 74 (RRALSDSAEPARVPSVESARVPEKLAKEDSPLATPKRNSPDYNV) are disordered. The span at 50-60 (RVPEKLAKEDS) shows a compositional bias: basic and acidic residues.

It belongs to the complex I NDUFS4 subunit family. As to quaternary structure, complex I is composed of about 40 different subunits. This is a component of the iron-sulfur (IP) fragment of the enzyme.

The protein resides in the mitochondrion inner membrane. Its function is as follows. Accessory subunit of the mitochondrial membrane respiratory chain NADH dehydrogenase (Complex I), that is believed not to be involved in catalysis. Complex I functions in the transfer of electrons from NADH to the respiratory chain. The immediate electron acceptor for the enzyme is believed to be ubiquinone. The sequence is that of NADH-ubiquinone oxidoreductase 21 kDa subunit, mitochondrial (nuo-21) from Neurospora crassa (strain ATCC 24698 / 74-OR23-1A / CBS 708.71 / DSM 1257 / FGSC 987).